A 76-amino-acid chain; its full sequence is DNA-directed RNA polymerase subunit epsilon (76 aa).

This sequence belongs to the RNA polymerase subunit epsilon family. RNAP is composed of a core of 2 alpha, a beta and a beta' subunit. The core is associated with a delta subunit, and at least one of epsilon or omega. When a sigma factor is associated with the core the holoenzyme is formed, which can initiate transcription.

The catalysed reaction is RNA(n) + a ribonucleoside 5'-triphosphate = RNA(n+1) + diphosphate. In terms of biological role, a non-essential component of RNA polymerase (RNAP). This Streptococcus equi subsp. zooepidemicus (strain H70) protein is DNA-directed RNA polymerase subunit epsilon.